We begin with the raw amino-acid sequence, 364 residues long: Abhydrolase domain-containing protein C57A10.08c (364 aa).

The Cytoplasmic segment spans residues 1-8; sequence MYFFTISR. Residues 9–29 form a helical; Signal-anchor for type II membrane protein membrane-spanning segment; it reads LTSFISYGILGALGILTFLYL. The Lumenal portion of the chain corresponds to 30 to 364; that stretch reads YDAYLAKSFQ…DKFSTTDHNI (335 aa). Serine 183 (charge relay system) is an active-site residue. An N-linked (GlcNAc...) asparagine glycan is attached at asparagine 326. Histidine 336 functions as the Charge relay system in the catalytic mechanism.

Belongs to the AB hydrolase superfamily.

It localises to the endoplasmic reticulum membrane. The sequence is that of Abhydrolase domain-containing protein C57A10.08c from Schizosaccharomyces pombe (strain 972 / ATCC 24843) (Fission yeast).